A 564-amino-acid polypeptide reads, in one-letter code: H/ACA ribonucleoprotein complex non-core subunit NAF1 (564 aa).

Disordered stretches follow at residues 1-29 (MESEQPAAVKASAPIEEPQSTETAVELGK), 108-218 (LVVQ…DSEG), 238-264 (DEDDEDFDEDGATGDRSRRRQPPKVRG), 387-489 (ASWE…HPSY), and 538-564 (PHMYPPPPPFAPPPPNNQSHQGQPPPS). Over residues 146-157 (ASGLSLLAAYSS) the composition is skewed to low complexity. The segment covering 238 to 249 (DEDDEDFDEDGA) has biased composition (acidic residues). The residue at position 250 (threonine 250) is a Phosphothreonine. Residue serine 254 is modified to Phosphoserine. Over residues 388-402 (SWEHDVEPPARYVDH) the composition is skewed to basic and acidic residues. Phosphoserine is present on serine 403. The segment covering 426-446 (STDSVDTVTSVATTATKASSV) has biased composition (low complexity). Threonine 427 carries the post-translational modification Phosphothreonine. At serine 429 the chain carries Phosphoserine. Phosphothreonine is present on threonine 432. The span at 468-489 (PSINQHNQNQPQDEQYNFHPSY) shows a compositional bias: polar residues. Over residues 538-553 (PHMYPPPPPFAPPPPN) the composition is skewed to pro residues. Residues 554 to 564 (NQSHQGQPPPS) are compositionally biased toward polar residues.

Belongs to the NAF1 family. As to quaternary structure, during assembly of the complex, component of the box H/ACA small nucleolar ribonucleoprotein (H/ACA snoRNP) complex.

It localises to the nucleus. Functionally, RNA-binding protein required for the maturation of the box H/ACA small nucleolar ribonucleoprotein (H/ACA snoRNP) complex and ribosome biogenesis. During assembly of the H/ACA snoRNP complex it associates with the complex and dissociates during complex maturation, becoming replaced by Gar1 to yield mature H/ACA snoRNP complex. The polypeptide is H/ACA ribonucleoprotein complex non-core subunit NAF1 (Drosophila melanogaster (Fruit fly)).